Consider the following 51-residue polypeptide: Putative ribosomal protein eL39-like 5 (51 aa).

This sequence belongs to the eukaryotic ribosomal protein eL39 family.

The polypeptide is Putative ribosomal protein eL39-like 5 (RPL39P5) (Homo sapiens (Human)).